The primary structure comprises 66 residues: UPF0434 protein M446_0487 (66 aa).

The protein belongs to the UPF0434 family.

In Methylobacterium sp. (strain 4-46), this protein is UPF0434 protein M446_0487.